Reading from the N-terminus, the 98-residue chain is MVKMSHGPRSGSRRKLTKSAEERKRSVIGRFMQEFEPGDRVAIDIEPSVHAGMPYHRFQGYTGVVEGPQGDCYKVAVKIDSLTKYVIASPVHLKKIKG.

Residues 1-24 (MVKMSHGPRSGSRRKLTKSAEERK) form a disordered region.

Belongs to the eukaryotic ribosomal protein eL21 family.

This Thermoplasma acidophilum (strain ATCC 25905 / DSM 1728 / JCM 9062 / NBRC 15155 / AMRC-C165) protein is Large ribosomal subunit protein eL21 (rpl21e).